A 222-amino-acid polypeptide reads, in one-letter code: Putative N-acetylmannosamine-6-phosphate 2-epimerase (222 aa).

This sequence belongs to the NanE family.

It catalyses the reaction an N-acyl-D-glucosamine 6-phosphate = an N-acyl-D-mannosamine 6-phosphate. It functions in the pathway amino-sugar metabolism; N-acetylneuraminate degradation; D-fructose 6-phosphate from N-acetylneuraminate: step 3/5. Functionally, converts N-acetylmannosamine-6-phosphate (ManNAc-6-P) to N-acetylglucosamine-6-phosphate (GlcNAc-6-P). This is Putative N-acetylmannosamine-6-phosphate 2-epimerase from Staphylococcus saprophyticus subsp. saprophyticus (strain ATCC 15305 / DSM 20229 / NCIMB 8711 / NCTC 7292 / S-41).